The chain runs to 105 residues: Small ribosomal subunit protein uS10c (105 aa).

Belongs to the universal ribosomal protein uS10 family. Part of the 30S ribosomal subunit.

The protein resides in the plastid. The protein localises to the cyanelle. Functionally, involved in the binding of tRNA to the ribosomes. This Cyanophora paradoxa protein is Small ribosomal subunit protein uS10c (rps10).